The sequence spans 423 residues: Glycine amidinotransferase, mitochondrial (423 aa).

The transit peptide at 1–43 (MLRVRCLRGGSRGAEAVHYIGSRLGRTLTGWVQRTFQSTQAAT) directs the protein to the mitochondrion. Positions 43–63 (TASSRNSFAADDKATEPLPKD) are disordered. Residues Ser46 and Ser49 each carry the phosphoserine modification. A compositionally biased stretch (basic and acidic residues) spans 52 to 61 (ADDKATEPLP). Asp170 is a binding site for arginine. Active-site residues include Asp254 and His303. Arginine-binding residues include Asp305, Arg322, Ser354, and Ser355. Lys385 carries the post-translational modification N6-acetyllysine. The active-site Amidino-cysteine intermediate is Cys407.

It belongs to the amidinotransferase family. As to quaternary structure, homodimer.

Its subcellular location is the mitochondrion inner membrane. It carries out the reaction L-arginine + glycine = guanidinoacetate + L-ornithine. The catalysed reaction is 4-aminobutanoate + L-arginine = 4-guanidinobutanoate + L-ornithine. The enzyme catalyses beta-alanine + L-arginine = 3-guanidinopropanoate + L-ornithine. It catalyses the reaction taurine + L-arginine = taurocyamine + L-ornithine. The protein operates within amine and polyamine biosynthesis; creatine biosynthesis; creatine from L-arginine and glycine: step 1/2. Its function is as follows. Transamidinase that catalyzes the transfer of the amidino group of L-arginine onto the amino moiety of acceptor metabolites such as glycine, beta-alanine, gamma-aminobutyric acid (GABA) and taurine yielding the corresponding guanidine derivatives. Catalyzes the rate-limiting step of creatine biosynthesis, namely the transfer of the amidino group from L-arginine to glycine to generate guanidinoacetate, which is then methylated by GAMT to form creatine. Provides creatine as a source for ATP generation in tissues with high energy demands, in particular skeletal muscle, heart and brain. In Macaca fascicularis (Crab-eating macaque), this protein is Glycine amidinotransferase, mitochondrial (GATM).